A 329-amino-acid chain; its full sequence is Malate dehydrogenase (329 aa).

An NAD(+)-binding site is contributed by 12 to 18 (GAAGQIG). Positions 93 and 99 each coordinate substrate. NAD(+) is bound by residues Asn-106, Gln-113, and 130–132 (VGN). Residues Asn-132 and Arg-163 each coordinate substrate. His-188 serves as the catalytic Proton acceptor.

It belongs to the LDH/MDH superfamily. MDH type 2 family.

It catalyses the reaction (S)-malate + NAD(+) = oxaloacetate + NADH + H(+). Strongly inhibited by Hg(2+) and Zn(2+). Activated by Na(+), NH(4)(+), Ca(2+), Cu(2+) and Mg(2+). Its function is as follows. Catalyzes the reversible oxidation of malate to oxaloacetate. Exhibits remarkably higher catalytic efficiency for oxaloacetate reduction than for malate oxidation in vitro. Highly specific for NAD(H). Can also use NADPH for oxaloacetate reduction, but catalytic efficiency is 97-fold higher with NADH. No activity detected with NADP(+) and malate. The chain is Malate dehydrogenase from Streptomyces avermitilis (strain ATCC 31267 / DSM 46492 / JCM 5070 / NBRC 14893 / NCIMB 12804 / NRRL 8165 / MA-4680).